The primary structure comprises 331 residues: MMRNVLLLCGGGSSEHEISLLSSEYLQQQLGLIENVNVLKVEIKNEGWFDQKERLVYLDIHTKSVKSDEFNESIHIDFIVPCIHGFPGETGDIQSLFELAGIPYLGCGPEASSNSFNKITSKLWYDAIGIPNTPYLFLTENNEESHQLSREAFDKWGKLFVKAARQGSSVGCYSVTKIEQLSDAIDKAFGFSHQVLVEKAVKPRELEVSAYEMNGQLHISKPGEIIAPDGAFYSYDEKYSAGSHSITEVEAKNLTEQQLATIQLCSEKVFRQMNLRHLSRIDFFLTSEGEIYLNEVNTFPGMTKISMFPKMLQHNGHKFHEFLADCIERSL.

Residues K122–E328 form the ATP-grasp domain. A152–E207 is an ATP binding site. The Mg(2+) site is built by D282, E295, and N297.

Belongs to the D-alanine--D-alanine ligase family. It depends on Mg(2+) as a cofactor. Mn(2+) serves as cofactor.

The protein localises to the cytoplasm. The catalysed reaction is 2 D-alanine + ATP = D-alanyl-D-alanine + ADP + phosphate + H(+). The protein operates within cell wall biogenesis; peptidoglycan biosynthesis. Cell wall formation. This chain is D-alanine--D-alanine ligase, found in Vibrio vulnificus (strain CMCP6).